Consider the following 434-residue polypeptide: tRNA dimethylallyltransferase (434 aa).

10 to 17 (GTTGAGKS) serves as a coordination point for ATP. 12–17 (TGAGKS) is a binding site for substrate. 2 interaction with substrate tRNA regions span residues 35–38 (DSMQ) and 166–170 (RKIRR). Positions 211–233 (SLVLMPRLDKRVDKMLSHGLVDE) are interaction with isopentenylpyrophosphate transferase. Interaction with substrate tRNA stretches follow at residues 256–258 (QCI), 281–299 (RMKV…WIQS), and 291–298 (KSQKKWIQ). The segment at 380–416 (FVCEECLDKRGDPFTVIGEDAFNVHIKSRKHKTTVRR) adopts a Matrin-type zinc-finger fold.

This sequence belongs to the IPP transferase family.

The protein resides in the mitochondrion. It is found in the cytoplasm. The protein localises to the nucleus. The enzyme catalyses adenosine(37) in tRNA + dimethylallyl diphosphate = N(6)-dimethylallyladenosine(37) in tRNA + diphosphate. Its function is as follows. Catalyzes the transfer of a dimethylallyl group onto the adenine at position 37 of both cytosolic and mitochondrial tRNAs, leading to the formation of N6-(dimethylallyl)adenosine (i(6)A). This chain is tRNA dimethylallyltransferase (tit1), found in Schizosaccharomyces pombe (strain 972 / ATCC 24843) (Fission yeast).